We begin with the raw amino-acid sequence, 545 residues long: Glucose-6-phosphate isomerase (545 aa).

Glu351 functions as the Proton donor in the catalytic mechanism. Catalysis depends on residues His382 and Lys510.

It belongs to the GPI family.

It localises to the cytoplasm. It carries out the reaction alpha-D-glucose 6-phosphate = beta-D-fructose 6-phosphate. The protein operates within carbohydrate biosynthesis; gluconeogenesis. It participates in carbohydrate degradation; glycolysis; D-glyceraldehyde 3-phosphate and glycerone phosphate from D-glucose: step 2/4. Functionally, catalyzes the reversible isomerization of glucose-6-phosphate to fructose-6-phosphate. This chain is Glucose-6-phosphate isomerase, found in Shewanella halifaxensis (strain HAW-EB4).